The chain runs to 195 residues: Imidazoleglycerol-phosphate dehydratase (195 aa).

This sequence belongs to the imidazoleglycerol-phosphate dehydratase family.

Its subcellular location is the cytoplasm. The enzyme catalyses D-erythro-1-(imidazol-4-yl)glycerol 3-phosphate = 3-(imidazol-4-yl)-2-oxopropyl phosphate + H2O. The protein operates within amino-acid biosynthesis; L-histidine biosynthesis; L-histidine from 5-phospho-alpha-D-ribose 1-diphosphate: step 6/9. This chain is Imidazoleglycerol-phosphate dehydratase, found in Campylobacter concisus (strain 13826).